The primary structure comprises 198 residues: NAD(P)H dehydrogenase (quinone) (198 aa).

The 186-residue stretch at 4–189 (ILVLYYSMYG…SIARYQGEYV (186 aa)) folds into the Flavodoxin-like domain. Residues 10-15 (SMYGHI) and 78-80 (TRF) each bind FMN. Tyrosine 12 is a binding site for NAD(+). Tryptophan 98 contributes to the substrate binding site. FMN is bound by residues 113 to 118 (STGTGG) and histidine 133.

The protein belongs to the WrbA family. FMN serves as cofactor.

It carries out the reaction a quinone + NADH + H(+) = a quinol + NAD(+). The catalysed reaction is a quinone + NADPH + H(+) = a quinol + NADP(+). This Salmonella agona (strain SL483) protein is NAD(P)H dehydrogenase (quinone).